Consider the following 89-residue polypeptide: Cell division topological specificity factor (89 aa).

Belongs to the MinE family.

Its function is as follows. Prevents the cell division inhibition by proteins MinC and MinD at internal division sites while permitting inhibition at polar sites. This ensures cell division at the proper site by restricting the formation of a division septum at the midpoint of the long axis of the cell. This is Cell division topological specificity factor from Laribacter hongkongensis (strain HLHK9).